The sequence spans 388 residues: Deoxyuridine 5'-triphosphate nucleotidohydrolase (388 aa).

Basic and acidic residues predominate over residues 77-88 (EEKYDKEQHPGE). 2 disordered regions span residues 77 to 96 (EEKY…SPLP) and 336 to 388 (THTP…PRHP). A compositionally biased stretch (acidic residues) spans 351–363 (VDDDVDETEEDEK).

Belongs to the dUTPase family. Mg(2+) serves as cofactor.

It localises to the virion. The enzyme catalyses dUTP + H2O = dUMP + diphosphate + H(+). The protein operates within pyrimidine metabolism; dUMP biosynthesis; dUMP from dCTP (dUTP route): step 2/2. In terms of biological role, involved in nucleotide metabolism: produces dUMP, the immediate precursor of thymidine nucleotides and decreases the intracellular concentration of dUTP to avoid uracil incorporation into viral DNA. This chain is Deoxyuridine 5'-triphosphate nucleotidohydrolase, found in Human cytomegalovirus (strain AD169) (HHV-5).